The sequence spans 188 residues: Elongation factor P (188 aa).

This sequence belongs to the elongation factor P family.

The protein localises to the cytoplasm. It functions in the pathway protein biosynthesis; polypeptide chain elongation. Involved in peptide bond synthesis. Stimulates efficient translation and peptide-bond synthesis on native or reconstituted 70S ribosomes in vitro. Probably functions indirectly by altering the affinity of the ribosome for aminoacyl-tRNA, thus increasing their reactivity as acceptors for peptidyl transferase. The polypeptide is Elongation factor P (Rickettsia africae (strain ESF-5)).